Here is a 193-residue protein sequence, read N- to C-terminus: GTP cyclohydrolase-2 (193 aa).

A GTP-binding site is contributed by 45–49 (RIHSE). Cys-50, Cys-61, and Cys-63 together coordinate Zn(2+). Residues Gln-66, 87–89 (EGR), and Thr-109 contribute to the GTP site. Asp-121 (proton acceptor) is an active-site residue. Arg-123 serves as the catalytic Nucleophile. Residues Thr-144 and Lys-149 each contribute to the GTP site.

This sequence belongs to the GTP cyclohydrolase II family. It depends on Zn(2+) as a cofactor.

It catalyses the reaction GTP + 4 H2O = 2,5-diamino-6-hydroxy-4-(5-phosphoribosylamino)-pyrimidine + formate + 2 phosphate + 3 H(+). It functions in the pathway cofactor biosynthesis; riboflavin biosynthesis; 5-amino-6-(D-ribitylamino)uracil from GTP: step 1/4. Catalyzes the conversion of GTP to 2,5-diamino-6-ribosylamino-4(3H)-pyrimidinone 5'-phosphate (DARP), formate and pyrophosphate. The polypeptide is GTP cyclohydrolase-2 (Campylobacter hominis (strain ATCC BAA-381 / DSM 21671 / CCUG 45161 / LMG 19568 / NCTC 13146 / CH001A)).